A 776-amino-acid polypeptide reads, in one-letter code: Meiotic expression up-regulated protein 1/2 (776 aa).

5 coiled-coil regions span residues 87–122 (YVLK…AQEE), 173–227 (FSEL…DLKE), 265–307 (YKVE…NDEE), 362–430 (KMSQ…RNNS), and 496–595 (INNQ…NTEL).

The polypeptide is Meiotic expression up-regulated protein 1/2 (meu1) (Schizosaccharomyces pombe (strain 972 / ATCC 24843) (Fission yeast)).